The following is a 1228-amino-acid chain: Nitrate reductase alpha chain (1228 aa).

A 4Fe-4S Mo/W bis-MGD-type domain is found at 47 to 111 (DKVVRSTHGV…SFSWYIYSPL (65 aa)). Residues H54, C58, C62, and C97 each coordinate [4Fe-4S] cluster. Residue D227 coordinates Mo-bis(molybdopterin guanine dinucleotide).

Belongs to the prokaryotic molybdopterin-containing oxidoreductase family. Requires [4Fe-4S] cluster as cofactor. Mo-bis(molybdopterin guanine dinucleotide) serves as cofactor.

It localises to the cell membrane. The catalysed reaction is nitrate + a quinol = a quinone + nitrite + H2O. The alpha chain is the actual site of nitrate reduction. The sequence is that of Nitrate reductase alpha chain (narG) from Bacillus subtilis (strain 168).